Consider the following 283-residue polypeptide: Methylamine utilization protein MauF (283 aa).

A run of 7 helical transmembrane segments spans residues 37–57 (FALM…LHSA), 58–78 (MSAT…GGFL), 116–136 (GYAI…WLLF), 143–163 (YMVA…FGFM), 187–207 (IGLL…QTPI), 210–230 (IVTG…IIGI), and 263–283 (VEVD…LLVL).

Its subcellular location is the cell membrane. It functions in the pathway one-carbon metabolism; methylamine degradation. The sequence is that of Methylamine utilization protein MauF (mauF) from Methylobacillus flagellatus (strain ATCC 51484 / DSM 6875 / VKM B-1610 / KT).